We begin with the raw amino-acid sequence, 344 residues long: Thioredoxin domain-containing protein 15 (344 aa).

Positions methionine 1–glycine 20 are cleaved as a signal peptide. The Extracellular segment spans residues leucine 21–threonine 305. 2 disordered regions span residues aspartate 55 to glutamine 119 and glycine 136 to serine 156. Residues glutamate 88–aspartate 97 show a composition bias toward basic and acidic residues. The region spanning glutamate 163–glycine 280 is the Thioredoxin domain. 4 N-linked (GlcNAc...) asparagine glycosylation sites follow: asparagine 171, asparagine 178, asparagine 190, and asparagine 277. The chain crosses the membrane as a helical span at residues valine 306–isoleucine 326. Topologically, residues arginine 327 to glutamate 344 are cytoplasmic.

It localises to the cell projection. The protein localises to the cilium membrane. Functionally, acts as a positive regulator of ciliary hedgehog signaling. Required for cilia biogenesis. This is Thioredoxin domain-containing protein 15 (Txndc15) from Mus musculus (Mouse).